The primary structure comprises 270 residues: Glucosamine-6-phosphate deaminase (270 aa).

D68 functions as the Proton acceptor; for enolization step in the catalytic mechanism. The active-site For ring-opening step is the D145. Residue H147 is the Proton acceptor; for ring-opening step of the active site. E152 (for ring-opening step) is an active-site residue.

This sequence belongs to the glucosamine/galactosamine-6-phosphate isomerase family. NagB subfamily.

It carries out the reaction alpha-D-glucosamine 6-phosphate + H2O = beta-D-fructose 6-phosphate + NH4(+). It functions in the pathway amino-sugar metabolism; N-acetylneuraminate degradation; D-fructose 6-phosphate from N-acetylneuraminate: step 5/5. In terms of biological role, catalyzes the reversible isomerization-deamination of glucosamine 6-phosphate (GlcN6P) to form fructose 6-phosphate (Fru6P) and ammonium ion. In Bifidobacterium longum (strain DJO10A), this protein is Glucosamine-6-phosphate deaminase.